The sequence spans 620 residues: DNA mismatch repair protein MutL (620 aa).

Belongs to the DNA mismatch repair MutL/HexB family.

Its function is as follows. This protein is involved in the repair of mismatches in DNA. It is required for dam-dependent methyl-directed DNA mismatch repair. May act as a 'molecular matchmaker', a protein that promotes the formation of a stable complex between two or more DNA-binding proteins in an ATP-dependent manner without itself being part of a final effector complex. This chain is DNA mismatch repair protein MutL, found in Clostridium tetani (strain Massachusetts / E88).